Consider the following 330-residue polypeptide: Type II methyltransferase M.MthTI (330 aa).

In terms of domain architecture, SAM-dependent MTase C5-type spans 3–328 (MDIASFFSGA…KKIKKDLEGV (326 aa)). C73 is an active-site residue.

This sequence belongs to the class I-like SAM-binding methyltransferase superfamily. C5-methyltransferase family.

It carries out the reaction a 2'-deoxycytidine in DNA + S-adenosyl-L-methionine = a 5-methyl-2'-deoxycytidine in DNA + S-adenosyl-L-homocysteine + H(+). In terms of biological role, a methylase that recognizes the double-stranded sequence 5'-GGCC-3', methylates C-3 on both strands, and protects the DNA from cleavage by the MthTI endonuclease. The protein is Type II methyltransferase M.MthTI (mthTIM) of Methanothermobacter thermautotrophicus (Methanobacterium thermoformicicum).